A 56-amino-acid chain; its full sequence is Ribosome biogenesis protein Nop10 (56 aa).

The protein belongs to the NOP10 family.

Its function is as follows. Involved in ribosome biogenesis; more specifically in 18S rRNA pseudouridylation and in cleavage of pre-rRNA. In Saccharolobus islandicus (strain Y.N.15.51 / Yellowstone #2) (Sulfolobus islandicus), this protein is Ribosome biogenesis protein Nop10.